A 219-amino-acid polypeptide reads, in one-letter code: uncharacterized protein (219 aa).

The protein belongs to the CIA30 family.

The protein resides in the cytoplasm. The protein localises to the nucleus. This is an uncharacterized protein from Schizosaccharomyces pombe (strain 972 / ATCC 24843) (Fission yeast).